The sequence spans 323 residues: rRNA 2'-O-methyltransferase fibrillarin (323 aa).

The segment at 1–80 (MGFERGGRGG…AKGGAAGKKV (80 aa)) is disordered. An asymmetric dimethylarginine mark is found at Arg5, Arg8, Arg12, Arg16, Arg23, Arg26, Arg30, Arg34, Arg41, Arg47, Arg49, Arg53, Arg57, Arg62, Arg64, and Arg68. Over residues 8–76 (RGGARGGGRG…ARGGAKGGAA (69 aa)) the composition is skewed to gly residues. S-adenosyl-L-methionine is bound by residues 174–175 (TS), 193–194 (EF), 218–219 (DA), and 238–241 (DVAQ).

It belongs to the methyltransferase superfamily. Fibrillarin family. In terms of assembly, component of box C/D small nucleolar ribonucleoprotein (snoRNP) particles. By homology to other fibrillarins, some or all of the N-terminal domain arginines are modified to asymmetric dimethylarginine (DMA).

The protein localises to the nucleus. The protein resides in the nucleolus. The catalysed reaction is L-glutaminyl-[histone H2A] + S-adenosyl-L-methionine = N(5)-methyl-L-glutaminyl-[histone H2A] + S-adenosyl-L-homocysteine + H(+). Its function is as follows. S-adenosyl-L-methionine-dependent methyltransferase that has the ability to methylate both RNAs and proteins. Involved in pre-rRNA processing. Utilizes the methyl donor S-adenosyl-L-methionine to catalyze the site-specific 2'-hydroxyl methylation of ribose moieties in pre-ribosomal RNA. Site specificity is provided by a guide RNA that base pairs with the substrate. Methylation occurs at a characteristic distance from the sequence involved in base pairing with the guide RNA. Also acts as a protein methyltransferase by mediating methylation of 'Gln-105' of histone H2A (H2AQ105me), a modification that impairs binding of the FACT complex and is specifically present at 35S ribosomal DNA locus. The sequence is that of rRNA 2'-O-methyltransferase fibrillarin (nop-1) from Neurospora crassa (strain ATCC 24698 / 74-OR23-1A / CBS 708.71 / DSM 1257 / FGSC 987).